Consider the following 359-residue polypeptide: Membrane-bound lytic murein transglycosylase C (359 aa).

The signal sequence occupies residues 1–16; that stretch reads MKKYLALALIAPLLIS. Residue C17 is the site of N-palmitoyl cysteine attachment. C17 carries the S-diacylglycerol cysteine lipid modification.

This sequence belongs to the transglycosylase Slt family.

Its subcellular location is the cell outer membrane. It catalyses the reaction Exolytic cleavage of the (1-&gt;4)-beta-glycosidic linkage between N-acetylmuramic acid (MurNAc) and N-acetylglucosamine (GlcNAc) residues in peptidoglycan, from either the reducing or the non-reducing ends of the peptidoglycan chains, with concomitant formation of a 1,6-anhydrobond in the MurNAc residue.. Murein-degrading enzyme. May play a role in recycling of muropeptides during cell elongation and/or cell division. The polypeptide is Membrane-bound lytic murein transglycosylase C (Escherichia coli O81 (strain ED1a)).